Reading from the N-terminus, the 896-residue chain is Translation initiation factor IF-2 (896 aa).

Basic and acidic residues predominate over residues 93-219 (VKRDPQEAER…RMAEENEKNW (127 aa)). Residues 93–307 (VKRDPQEAER…GSALQQGFQK (215 aa)) are disordered. Over residues 256–271 (GRSRSSKAARPAKKGN) the composition is skewed to basic residues. A compositionally biased stretch (basic and acidic residues) spans 272–285 (KHAESKADREEARA). The region spanning 395-564 (PRAPVVTIMG…LLQAEVLELK (170 aa)) is the tr-type G domain. The segment at 404 to 411 (GHVDHGKT) is G1. 404–411 (GHVDHGKT) is a GTP binding site. The interval 429 to 433 (GITQH) is G2. The segment at 450 to 453 (DTPG) is G3. Residues 450–454 (DTPGH) and 504–507 (NKID) each bind GTP. The G4 stretch occupies residues 504-507 (NKID). Residues 540–542 (SAK) form a G5 region.

It belongs to the TRAFAC class translation factor GTPase superfamily. Classic translation factor GTPase family. IF-2 subfamily.

It localises to the cytoplasm. One of the essential components for the initiation of protein synthesis. Protects formylmethionyl-tRNA from spontaneous hydrolysis and promotes its binding to the 30S ribosomal subunits. Also involved in the hydrolysis of GTP during the formation of the 70S ribosomal complex. In Klebsiella pneumoniae subsp. pneumoniae (strain ATCC 700721 / MGH 78578), this protein is Translation initiation factor IF-2.